Reading from the N-terminus, the 326-residue chain is MLFSGSAIPLSSFCSLPEKPHTLPMKLSPAAIRSSSSSAPGSLNFDLRTYWTTLITEINQKLDEAIPVKHPAGIYEAMRYSVLAQGAKRAPPVMCVAACELFGGDRLAAFPTACALEMVHAASLIHDDLPCMDDDPVRRGKPSNHTVYGSGMAILAGDALFPLAFQHIVSHTPPDLVPRATILRLITEIARTVGSTGMAAGQYVDLEGGPFPLSFVQEKKFGAMGECSAVCGGLLGGATEDELQSLRRYGRAVGMLYQVVDDITEDKKKSYDGGAEKGMMEMAEELKEKAKKELQVFDNKYGGGDTLVPLYTFVDYAAHRHFLLPL.

A chloroplast-targeting transit peptide spans 1–33; the sequence is MLFSGSAIPLSSFCSLPEKPHTLPMKLSPAAIR. Lys-88 and His-120 together coordinate isopentenyl diphosphate. Mg(2+) contacts are provided by Asp-127 and Asp-133. Position 138 (Arg-138) interacts with dimethylallyl diphosphate. Arg-139 is a binding site for isopentenyl diphosphate. Dimethylallyl diphosphate contacts are provided by Lys-220 and Gln-258. Residues 274 to 301 adopt a coiled-coil conformation; sequence GAEKGMMEMAEELKEKAKKELQVFDNKY.

It belongs to the FPP/GGPP synthase family. As to quaternary structure, part of a heterodimeric geranyl(geranyl)diphosphate synthase. Interacts with GGPPS1 or GGPPS2, but not with GGPPS9. Interacts with LIL3.1 and LIL3.2. Requires Mg(2+) as cofactor. Expressed ubiquitously.

The protein localises to the plastid. The protein resides in the chloroplast thylakoid membrane. Heterodimeric geranyl(geranyl)-diphosphate (GPP) synthase small subunit. The small subunit alone is inactive in vitro while the large subunit GGPPS1 catalyzes mainly the production of geranygeranyl-diphosphate in vitro. Upon association of the two subunits, the product profile changes and the production of gerany-diphosphate is strongly increased. The sequence is that of Heterodimeric geranylgeranyl pyrophosphate synthase small subunit, chloroplastic (GGR) from Arabidopsis thaliana (Mouse-ear cress).